We begin with the raw amino-acid sequence, 59 residues long: MAVPKRKTSKSKRDMRRASNSKFVAPGYVKCPQCHETKLPHRVCPDCGHYNGKEVIAAE.

Over residues 1–15 (MAVPKRKTSKSKRDM) the composition is skewed to basic residues. The interval 1-21 (MAVPKRKTSKSKRDMRRASNS) is disordered.

Belongs to the bacterial ribosomal protein bL32 family.

This chain is Large ribosomal subunit protein bL32, found in Alkaliphilus metalliredigens (strain QYMF).